The primary structure comprises 147 residues: Large ribosomal subunit protein uL13 (147 aa).

It belongs to the universal ribosomal protein uL13 family. In terms of assembly, part of the 50S ribosomal subunit.

In terms of biological role, this protein is one of the early assembly proteins of the 50S ribosomal subunit, although it is not seen to bind rRNA by itself. It is important during the early stages of 50S assembly. The protein is Large ribosomal subunit protein uL13 of Ligilactobacillus salivarius (strain UCC118) (Lactobacillus salivarius).